Reading from the N-terminus, the 661-residue chain is UvrABC system protein B (661 aa).

Residues 25–182 (KGLNNKKRSQ…NDLVNLQYER (158 aa)) form the Helicase ATP-binding domain. An ATP-binding site is contributed by 38 to 45 (GITGSGKT). The short motif at 91 to 114 (YYDYYQPEAYIPKTDVFIEKDSSI) is the Beta-hairpin element. Positions 430–592 (QVEDLVGEIQ…IIPKTINRTI (163 aa)) constitute a Helicase C-terminal domain. The region spanning 621-656 (KAHIDKLRKEMLKAASNLEFEQAAKLRDQLKTLEEA) is the UVR domain.

Belongs to the UvrB family. Forms a heterotetramer with UvrA during the search for lesions. Interacts with UvrC in an incision complex.

It localises to the cytoplasm. Functionally, the UvrABC repair system catalyzes the recognition and processing of DNA lesions. A damage recognition complex composed of 2 UvrA and 2 UvrB subunits scans DNA for abnormalities. Upon binding of the UvrA(2)B(2) complex to a putative damaged site, the DNA wraps around one UvrB monomer. DNA wrap is dependent on ATP binding by UvrB and probably causes local melting of the DNA helix, facilitating insertion of UvrB beta-hairpin between the DNA strands. Then UvrB probes one DNA strand for the presence of a lesion. If a lesion is found the UvrA subunits dissociate and the UvrB-DNA preincision complex is formed. This complex is subsequently bound by UvrC and the second UvrB is released. If no lesion is found, the DNA wraps around the other UvrB subunit that will check the other stand for damage. The protein is UvrABC system protein B of Rickettsia bellii (strain RML369-C).